The sequence spans 234 residues: 1-(5-phosphoribosyl)-5-[(5-phosphoribosylamino)methylideneamino] imidazole-4-carboxamide isomerase (234 aa).

Catalysis depends on Asp8, which acts as the Proton acceptor. Asp128 functions as the Proton donor in the catalytic mechanism.

Belongs to the HisA/HisF family.

Its subcellular location is the cytoplasm. It catalyses the reaction 1-(5-phospho-beta-D-ribosyl)-5-[(5-phospho-beta-D-ribosylamino)methylideneamino]imidazole-4-carboxamide = 5-[(5-phospho-1-deoxy-D-ribulos-1-ylimino)methylamino]-1-(5-phospho-beta-D-ribosyl)imidazole-4-carboxamide. It functions in the pathway amino-acid biosynthesis; L-histidine biosynthesis; L-histidine from 5-phospho-alpha-D-ribose 1-diphosphate: step 4/9. The sequence is that of 1-(5-phosphoribosyl)-5-[(5-phosphoribosylamino)methylideneamino] imidazole-4-carboxamide isomerase from Cenarchaeum symbiosum (strain A).